Consider the following 228-residue polypeptide: L-ribulose-5-phosphate 4-epimerase UlaF (228 aa).

Residues 26–27, 43–44, and 72–73 each bind substrate; these read GN, SG, and SS. Asp-74, His-93, and His-95 together coordinate Zn(2+). The Proton donor/acceptor role is filled by Asp-118. His-167 contacts Zn(2+). The active-site Proton donor/acceptor is the Tyr-225.

It belongs to the aldolase class II family. AraD/FucA subfamily. It depends on Zn(2+) as a cofactor.

It carries out the reaction L-ribulose 5-phosphate = D-xylulose 5-phosphate. It functions in the pathway cofactor degradation; L-ascorbate degradation; D-xylulose 5-phosphate from L-ascorbate: step 4/4. Catalyzes the isomerization of L-ribulose 5-phosphate to D-xylulose 5-phosphate. Is involved in the anaerobic L-ascorbate utilization. The chain is L-ribulose-5-phosphate 4-epimerase UlaF from Salmonella paratyphi A (strain ATCC 9150 / SARB42).